Consider the following 233-residue polypeptide: MASRQSPMAVSQPDHADRSAALQLTPVSRETERRLDAYLDLLRQWQAKTNLVAPSTLPQLWTRHVADSLQLLTLAPDARRWLDFGSGGGFPGIVLACAMAEHDGGHVTLVERNAKKAAFLREALRVTGSPGTVMLADIGDNVDRFPQGLDCITARAVAPLHQLIGFARPLMTEGSKALFLKGQDVEAELTEATRYWKIDPQLHASLTGGHGWIVEIDRIERQALPTASKEAAQ.

The tract at residues Met-1–Thr-25 is disordered. Residues Gly-85, Phe-90, and Arg-155 each coordinate S-adenosyl-L-methionine.

It belongs to the methyltransferase superfamily. RNA methyltransferase RsmG family.

It is found in the cytoplasm. The enzyme catalyses guanosine(527) in 16S rRNA + S-adenosyl-L-methionine = N(7)-methylguanosine(527) in 16S rRNA + S-adenosyl-L-homocysteine. Specifically methylates the N7 position of guanine in position 527 of 16S rRNA. The sequence is that of Ribosomal RNA small subunit methyltransferase G from Rhodopseudomonas palustris (strain BisB5).